The primary structure comprises 433 residues: Xylose isomerase (433 aa).

Catalysis depends on residues histidine 99 and aspartate 102. Glutamate 230, glutamate 266, histidine 269, aspartate 294, aspartate 305, aspartate 307, and aspartate 337 together coordinate Mg(2+).

Belongs to the xylose isomerase family. In terms of assembly, homotetramer. Mg(2+) serves as cofactor.

Its subcellular location is the cytoplasm. It catalyses the reaction alpha-D-xylose = alpha-D-xylulofuranose. This Cereibacter sphaeroides (strain ATCC 17023 / DSM 158 / JCM 6121 / CCUG 31486 / LMG 2827 / NBRC 12203 / NCIMB 8253 / ATH 2.4.1.) (Rhodobacter sphaeroides) protein is Xylose isomerase.